The chain runs to 409 residues: Tryptophan synthase beta chain (409 aa).

At Lys95 the chain carries N6-(pyridoxal phosphate)lysine.

This sequence belongs to the TrpB family. In terms of assembly, tetramer of two alpha and two beta chains. Pyridoxal 5'-phosphate is required as a cofactor.

The catalysed reaction is (1S,2R)-1-C-(indol-3-yl)glycerol 3-phosphate + L-serine = D-glyceraldehyde 3-phosphate + L-tryptophan + H2O. The protein operates within amino-acid biosynthesis; L-tryptophan biosynthesis; L-tryptophan from chorismate: step 5/5. Functionally, the beta subunit is responsible for the synthesis of L-tryptophan from indole and L-serine. This Pseudomonas savastanoi pv. phaseolicola (Pseudomonas syringae pv. phaseolicola) protein is Tryptophan synthase beta chain.